A 636-amino-acid chain; its full sequence is ATP-dependent DNA helicase YoaA (636 aa).

The region spanning 10 to 272 (QLAKAIPGFK…KDTQQLQKCA (263 aa)) is the Helicase ATP-binding domain. 45–52 (AGTGTGKT) contacts ATP. Positions 108, 168, 173, and 179 each coordinate [4Fe-4S] cluster. The short motif at 225-228 (DEAH) is the DEAH box element.

The protein belongs to the helicase family. DinG subfamily. Interacts with the DNA polymerase III subunit Chi (holC), probably as a 1:1 complex. The cofactor is [4Fe-4S] cluster. Mg(2+) is required as a cofactor.

The enzyme catalyses Couples ATP hydrolysis with the unwinding of duplex DNA at the replication fork by translocating in the 5'-3' direction. This creates two antiparallel DNA single strands (ssDNA). The leading ssDNA polymer is the template for DNA polymerase III holoenzyme which synthesizes a continuous strand.. It catalyses the reaction ATP + H2O = ADP + phosphate + H(+). Non-hydrolyzable ATP analogs ATP-gamma-S and adenylyl-imidodiphosphate (AMP-PNP) inhibit helicase activity. DNA-dependent ATPase and 5'-3' DNA helicase. Has single-stranded (ss)DNA-dependent ATPase activity and 5'-3' helicase activity on forked DNA; both activities were measure in a YoaA:HolC (chi) complex. Requires a 20-35 nucleotide (nt) 5'-ssDNA tail; dsDNA with a 20 nt gap is also unwound. Unwinds damaged 3' nascent ends (such as those terminated by 3' azidothymidine (AZT), 3' dideoxy-C or an abasic site on the translocating strand), to promote repair and AZT excision. Without HolC the protein has much lower activity which could be due to YoaA instability or helicase stimulation by HolC. Genetically identified as involved in the repair of replication forks and tolerance of the chain-terminating nucleoside analog AZT. May act in proofreading during nucleotide misincorporation, it appears to aid in the removal of potential A-to-T transversion mutations in ndk mutants. This is ATP-dependent DNA helicase YoaA (yoaA) from Escherichia coli (strain K12).